Consider the following 3387-residue polypeptide: MNQRKKVARPPFNMLKRERNRVSTPQGLVKRFSTGLFSGKGPLRMVLAFITFLRVLSIPPTAGILKRWGQLKKNKAIKILTGFRKEIGRMLNILNGRKRSTITLLCLIPTVMAFHLSTRDGEPLMIVAKHERGRPLLFKTTEGINKCTLIAMDLGEMCEDTVTYKCPLLVNTEPEDIDCWCNLTSAWVMYGTCTQSGERRREKRSVALTPHSGMGLETRAETWMSSEGAWKHAQRVESWILRNPGFALLAGFMAYMIGQTGIQRTVFFILMMLVAPSYGMRCVGVGNRDFVEGVSGGAWVDLVLEHGGCVTTMAQGKPTLDFELIKTTAKEVALLRTYCIEASISNITTATRCPTQGEPYLKEEQDQQYICRRDMVDRGWGNGCGLFGKGGVVTCAKFSCSGKITGNLVQIENLEYTVVVTVHNGDTHAVGNDTSNHGVTATITPRSPSVEVKLPDYGELTLDCEPRSGIDFNEMILMKMKTKTWLVHKQWFLDLPLPWTAGADTLEVHWNHKERMVTFKVPHAKRQDVTVLGSQEGAMHSALAGATEVDSGDGNHMFAGHLKCKVRMEKLRIKGMSYTMCSGKFSIDKEMAETQHGTTVVKVKYEGTGAPCKVPIEIRDVNKEKVVGRIISSTPFAENTNSVTNIELEPPFGDSYIVIGVGDSALTLHWFRKGSSIGKMFESTYRGAKRMAILGETAWDFGSVGGLLTSLGKAVHQVFGSVYTTMFGGVSWMVRILIGLLVLWIGTNSRNTSMAMSCIAVGGITLFLGFTVHADMGCAVSWSGKELKCGSGIFVIDNVHTWTEQYKFQPESPARLASAILNAHKDGVCGIRSTTRLENVMWKQITNELNYVLWEGGHDLTVVAGDVKGVLSKGKRALAPPVNDLKYSWKTWGKAKIFTPETRNSTFLVDGPDTSECPNERRAWNFLEVEDYGFGMFTTNIWMKFREGSSEVCDHRLMSAAIKDQKAVHADMGYWIESSKNQTWQIEKASLIEVKTCLWPKTHTLWSNGVLESQMLIPKAYAGPISQHNYRQGYATQTVGPWHLGKLEIDFGECPGTTVTIQEDCDHRGPSLRTTTASGKLVTQWCCRSCTMPPLRFLGEDGCWYGMEIRPLNEKEENMVKSQVSAGQGTSETFSMGLLCLTLFVEECLRRRVTRKHMILVVVTTLCAIILGGLTWMDLLRALIMLGDTMSGRMGGQIHLAIMAVFKMSPGYVLGIFLRKLTSRETALMVIGMAMTTVLSIPHDLMEFIDGISLGLILLKMVTHFDNTQVGTLALSLTFIKSTMPLVMAWRTIMAVLFVVTLIPLCRTSCLQKQSHWVEITALILGAQALPVYLMTLMKGASKRSWPLNEGIMAVGLVSLLGSALLKNDVPLAGPMVAGGLLLAAYVMSGSSADLSLEKAANVQWDEMADITGSSPIIEVKQDEDGSFSIRDVEETNMITLLVKLALITVSGLYPLAIPVTMTLWYMWQVKTQRSGALWDVPSPAAAQKATLTEGVYRIMQRGLFGKTQVGVGIHMEGVFHTMWHVTRGSVICHESGRLEPSWADVRNDMISYGGGWRLGDKWDKEEDVQVLAIEPGKNPKHVQTKPGLFKTLTGEIGAVTLDFKPGTSGSPIINRKGKVIGLYGNGVVTKSGDYVSAITQAERIGEPDYEVDEDIFRKKRLTIMDLHPGAGKTKRILPSIVREALKRRLRTLILAPTRVVAAEMEEALRGLPIRYQTPAVKSEHTGREIVDLMCHATFTTRLLSSTRVPNYNLIVMDEAHFTDPSSVAARGYISTRVEMGEAAAIFMTATPPGTTDPFPQSNSPIEDIEREIPERSWNTGFDWITDYQGKTVWFVPSIKAGNDIANCLRKSGKKVIQLSRKTFDTEYPKTKLTDWDFVVTTDISEMGANFRAGRVIDPRRCLKPVILTDGPERVILAGPIPVTPASAAQRRGRIGRNPAQEDDQYVFSGDPLRNDEDHAHWTEAKMLLDNIYTPEGIIPTLFGPEREKTQAIDGEFRLRGEQRKTFVELMRRGDLPVWLSYKVASAGISYKDREWCFTGERNNQILEENMEVEIWTREGEKKKLRPKWLDARVYADPMALKDFKEFASGRKSITLDILTEIASLPTYLSSRAKLALDNIVMLHTTERGGKAYQHALNELPESLETLMLVALLGAMTAGIFLFFMQGKGIGKLSMGLIAIAVASGLLWVAEIQPQWIAASIILEFFLMVLLVPEPEKQRTPQDNQLIYVILTILTIIALVAANEMGLIEKTKTDFGFYQAKTETTILDVDLRPASAWTLYAVATTILTPMLRHTIENTSANLSLAAIANQAAVLMGLGKGWPLHRMDLGVPLLAMGCYSQVNPTTLTASLVMLLVHYAIIGPGLQAKATREAQKRTAAGIMKNPTVDGITVIDLEPISYDPKFEKQLGQVMLLVLCAGQLLLMRTTWAFCEVLTLATGPILTLWEGNPGRFWNTTIAVSTANIFRGSYLAGAGLAFSLIKNAQTPRRGTGTTGETLGEKWKRQLNSLDRKEFEEYKRSGILEVDRTEAKSALKDGSKIKYAVSRGTSKIRWIVERGMVKPKGKVVDLGCGRGGWSYYMATLKNVTEVKGYTKGGPGHEEPIPMATYGWNLVKLHSGVDVFYKPTEQVDTLLCDIGESSSNPTIEEGRTLRVLKMVEPWLSSKPEFCIKVLNPYMPTVIEELEKLQRKHGGSLVRCPLSRNSTHEMYWVSGVSGNIVSSVNTTSKMLLNRFTTRHRKPTYEKDADLGAGTRSVSTETEKPDMTIIGRRLQRLQEEHKETWHYDHENPYRTWAYHGSYEAPSTGSASSMVNGVVKLLTKPWDVVPMVTQLAMTDTTPFGQQRVFKEKVDTRTPQPKPGTRVVMTTTANWLWALLGRKKNPRLCTREEFISKVRSNAAIGAVFQEEQGWTSASEAVNDSRFWELVDKERALHQEGKCESCVYNMMGKREKKLGEFGRAKGSRAIWYMWLGARFLEFEALGFLNEDHWFGRENSWSGVEGEGLHRLGYILEDIDKKDGDLIYADDTAGWDTRITEDDLLNEELITEQMAPHHKILAKAIFKLTYQNKVVKVLRPTPKGAVMDIISRKDQRGSGQVGTYGLNTFTNMEVQLIRQMEAEGVITRDDMHNPKGLKERVEKWLKECGVDRLKRMAISGDDCVVKPLDERFSTSLLFLNDMGKVRKDIPQWEPSKGWKNWQEVPFCSHHFHKIFMKDGRSLVVPCRNQDELIGRARISQGAGWSLRETACLGKAYAQMWSLMYFHRRDLRLASMAICSAVPTEWFPTSRTTWSIHAHHQWMTTEDMLKVWNRVWIEDNPNMIDKTPVHSWEDIPYLGKREDLWCGSLIGLSSRATWAKNIQTAITQVRNLIGKEEYVDYMPVMKRYSAHFESEGVL.

The Cytoplasmic portion of the chain corresponds to methionine 1 to serine 100. The hydrophobic; homodimerization of capsid protein C stretch occupies residues leucine 36–leucine 71. Positions serine 100–alanine 113 are cleaved as a propeptide — ER anchor for the capsid protein C, removed in mature form by serine protease NS3. The chain crosses the membrane as a helical span at residues threonine 101–serine 117. Residues threonine 118–glutamate 237 lie on the Extracellular side of the membrane. N-linked (GlcNAc...) asparagine; by host glycosylation is present at asparagine 182. A helical membrane pass occupies residues serine 238–glycine 258. Residues glutamine 259–threonine 265 lie on the Cytoplasmic side of the membrane. Residues valine 266–glycine 279 traverse the membrane as a helical segment. Residues methionine 280–threonine 725 lie on the Extracellular side of the membrane. 4 disulfides stabilise this stretch: cysteine 282–cysteine 309, cysteine 339–cysteine 400, cysteine 353–cysteine 384, and cysteine 371–cysteine 395. The N-linked (GlcNAc...) asparagine; by host glycan is linked to asparagine 346. The interval aspartate 377–glycine 390 is fusion peptide. Asparagine 432 carries an N-linked (GlcNAc...) asparagine; by host glycan. Intrachain disulfides connect cysteine 464-cysteine 564 and cysteine 581-cysteine 612. A helical membrane pass occupies residues methionine 726–glycine 746. Topologically, residues threonine 747–serine 753 are cytoplasmic. Residues methionine 754 to alanine 774 traverse the membrane as a helical segment. Topologically, residues aspartate 775–methionine 1194 are extracellular. Cystine bridges form between cysteine 778-cysteine 789, cysteine 829-cysteine 917, cysteine 953-cysteine 997, cysteine 1054-cysteine 1103, cysteine 1065-cysteine 1087, and cysteine 1086-cysteine 1090. 2 N-linked (GlcNAc...) asparagine; by host glycosylation sites follow: asparagine 904 and asparagine 981. The chain crosses the membrane as a helical span at residues glycine 1195–leucine 1218. Residues arginine 1219–arginine 1224 lie on the Lumenal side of the membrane. Residues glutamate 1225–histidine 1243 form a helical membrane-spanning segment. Residues aspartate 1244–asparagine 1267 lie on the Cytoplasmic side of the membrane. Residues threonine 1268–methionine 1288 form a helical membrane-spanning segment. Residue alanine 1289 is a topological domain, lumenal. The helical transmembrane segment at tryptophan 1290 to threonine 1308 threads the bilayer. Topologically, residues serine 1309–histidine 1316 are lumenal. Residues tryptophan 1317–leucine 1337 traverse the membrane as a helical segment. Topologically, residues methionine 1338 to serine 1345 are cytoplasmic. Residues tryptophan 1346–leucine 1366 form a helical membrane-spanning segment. Topologically, residues lysine 1367–aspartate 1369 are lumenal. The chain crosses the membrane as a helical span at residues valine 1370–glycine 1390. Topologically, residues serine 1391–asparagine 1437 are cytoplasmic. Residues leucine 1397–threonine 1436 are interacts with and activates NS3 protease. Positions methionine 1438–isoleucine 1458 form an intramembrane region, helical. At proline 1459–serine 2143 the chain is on the cytoplasmic side. The 178-residue stretch at serine 1475 to valine 1652 folds into the Peptidase S7 domain. Catalysis depends on charge relay system; for serine protease NS3 activity residues histidine 1525, aspartate 1549, and serine 1609. A Helicase ATP-binding domain is found at glutamate 1654–glutamate 1810. The important for RNA-binding stretch occupies residues arginine 1658–arginine 1661. Position 1667–1674 (leucine 1667–threonine 1674) interacts with ATP. Positions aspartate 1758 to histidine 1761 match the DEAH box motif. Residues threonine 1820 to arginine 1987 enclose the Helicase C-terminal domain. Lysine 1862 is modified (N6-acetyllysine; by host). Residues leucine 2144–phenylalanine 2164 form a helical membrane-spanning segment. Topologically, residues methionine 2165–glycine 2169 are lumenal. Positions isoleucine 2170–alanine 2190 form an intramembrane region, helical. Glutamate 2191 is a topological domain (lumenal). Residues isoleucine 2192–valine 2212 form a helical membrane-spanning segment. Residues proline 2213–glutamine 2225 are Cytoplasmic-facing. Residues leucine 2226–glycine 2246 form a helical membrane-spanning segment. Topologically, residues leucine 2247–aspartate 2270 are lumenal. Positions leucine 2271 to leucine 2291 form an intramembrane region, helical. The Lumenal segment spans residues arginine 2292–asparagine 2301. N-linked (GlcNAc...) asparagine; by host glycans are attached at residues asparagine 2297 and asparagine 2301. Residues leucine 2302–proline 2322 constitute an intramembrane region (helical). The Lumenal portion of the chain corresponds to leucine 2323–proline 2343. Residues threonine 2344–leucine 2364 form a helical membrane-spanning segment. At glutamine 2365–glutamine 2409 the chain is on the cytoplasmic side. Residues valine 2410–cysteine 2430 traverse the membrane as a helical segment. Residues glutamate 2431 to threonine 2455 are Lumenal-facing. Asparagine 2453 carries N-linked (GlcNAc...) asparagine; by host glycosylation. The helical transmembrane segment at isoleucine 2456–phenylalanine 2476 threads the bilayer. The Cytoplasmic portion of the chain corresponds to serine 2477 to leucine 3387. An mRNA cap 0-1 NS5-type MT domain is found at threonine 2489–serine 2751. Position 2543 (serine 2543) interacts with S-adenosyl-L-methionine. The residue at position 2543 (serine 2543) is a Phosphoserine. Lysine 2548 functions as the For 2'-O-MTase activity in the catalytic mechanism. An SUMO-interacting motif motif is present at residues valine 2564–leucine 2567. Residues glycine 2573, tryptophan 2574, threonine 2591, lysine 2592, aspartate 2618, and valine 2619 each contribute to the S-adenosyl-L-methionine site. Catalysis depends on aspartate 2633, which acts as the For 2'-O-MTase activity. S-adenosyl-L-methionine is bound at residue isoleucine 2634. Catalysis depends on for 2'-O-MTase activity residues lysine 2668 and glutamate 2704. Position 2706 (tyrosine 2706) interacts with S-adenosyl-L-methionine. 4 residues coordinate Zn(2+): glutamate 2925, histidine 2929, cysteine 2934, and cysteine 2937. The RdRp catalytic domain maps to leucine 3016 to leucine 3166. Positions 3200, 3216, and 3335 each coordinate Zn(2+).

The protein in the N-terminal section; belongs to the class I-like SAM-binding methyltransferase superfamily. mRNA cap 0-1 NS5-type methyltransferase family. Homodimer. Interacts (via N-terminus) with host EXOC1 (via C-terminus); this interaction results in EXOC1 degradation through the proteasome degradation pathway. In terms of assembly, forms heterodimers with envelope protein E in the endoplasmic reticulum and Golgi. As to quaternary structure, homodimer; in the endoplasmic reticulum and Golgi. Interacts with protein prM. Interacts with non-structural protein 1. Homodimer; Homohexamer when secreted. Interacts with envelope protein E. In terms of assembly, interacts (via N-terminus) with serine protease NS3. As to quaternary structure, forms a heterodimer with serine protease NS3. May form homooligomers. Forms a heterodimer with NS2B. Interacts with NS4B. Interacts with unphosphorylated RNA-directed RNA polymerase NS5; this interaction stimulates RNA-directed RNA polymerase NS5 guanylyltransferase activity. Interacts with host SHFL. In terms of assembly, interacts with host MAVS; this interaction inhibits the synthesis of IFN-beta. Interacts with host SHFL. Interacts with host AUP1; the interaction occurs in the presence of Dengue virus NS4B and induces lipophagy which facilitates production of virus progeny particles. As to quaternary structure, interacts with serine protease NS3. Homodimer. Interacts with host STAT2; this interaction inhibits the phosphorylation of the latter, and, when all viral proteins are present (polyprotein), targets STAT2 for degradation. Interacts with serine protease NS3. Interacts with host PAF1 complex; the interaction may prevent the recruitment of the PAF1 complex to interferon-responsive genes, and thus reduces the immune response. Specific enzymatic cleavages in vivo yield mature proteins. Cleavages in the lumen of endoplasmic reticulum are performed by host signal peptidase, whereas cleavages in the cytoplasmic side are performed by serine protease NS3. Signal cleavage at the 2K-4B site requires a prior NS3 protease-mediated cleavage at the 4A-2K site. Post-translationally, cleaved in post-Golgi vesicles by a host furin, releasing the mature small envelope protein M, and peptide pr. This cleavage is incomplete as up to 30% of viral particles still carry uncleaved prM. In terms of processing, N-glycosylated. N-glycosylated. The excreted form is glycosylated and this is required for efficient secretion of the protein from infected cells. Post-translationally, acetylated by host KAT5. Acetylation modulates NS3 RNA-binding and unwinding activities and plays an important positive role for viral replication. In terms of processing, sumoylation of RNA-directed RNA polymerase NS5 increases NS5 protein stability allowing proper viral RNA replication. Phosphorylated on serines residues. This phosphorylation may trigger NS5 nuclear localization.

It is found in the virion. It localises to the host nucleus. The protein resides in the host cytoplasm. Its subcellular location is the host perinuclear region. The protein localises to the secreted. It is found in the virion membrane. It localises to the host endoplasmic reticulum membrane. The protein resides in the host mitochondrion. It carries out the reaction Selective hydrolysis of -Xaa-Xaa-|-Yaa- bonds in which each of the Xaa can be either Arg or Lys and Yaa can be either Ser or Ala.. The catalysed reaction is RNA(n) + a ribonucleoside 5'-triphosphate = RNA(n+1) + diphosphate. It catalyses the reaction a ribonucleoside 5'-triphosphate + H2O = a ribonucleoside 5'-diphosphate + phosphate + H(+). The enzyme catalyses ATP + H2O = ADP + phosphate + H(+). It carries out the reaction a 5'-end (5'-triphosphoguanosine)-ribonucleoside in mRNA + S-adenosyl-L-methionine = a 5'-end (N(7)-methyl 5'-triphosphoguanosine)-ribonucleoside in mRNA + S-adenosyl-L-homocysteine. The catalysed reaction is a 5'-end (N(7)-methyl 5'-triphosphoguanosine)-ribonucleoside in mRNA + S-adenosyl-L-methionine = a 5'-end (N(7)-methyl 5'-triphosphoguanosine)-(2'-O-methyl-ribonucleoside) in mRNA + S-adenosyl-L-homocysteine + H(+). Its function is as follows. Plays a role in virus budding by binding to the cell membrane and gathering the viral RNA into a nucleocapsid that forms the core of a mature virus particle. During virus entry, may induce genome penetration into the host cytoplasm after hemifusion induced by the surface proteins. Can migrate to the cell nucleus where it modulates host functions. Overcomes the anti-viral effects of host EXOC1 by sequestering and degrading the latter through the proteasome degradation pathway. Inhibits RNA silencing by interfering with host Dicer. Functionally, prevents premature fusion activity of envelope proteins in trans-Golgi by binding to envelope protein E at pH6.0. After virion release in extracellular space, gets dissociated from E dimers. In terms of biological role, acts as a chaperone for envelope protein E during intracellular virion assembly by masking and inactivating envelope protein E fusion peptide. prM is the only viral peptide matured by host furin in the trans-Golgi network probably to avoid catastrophic activation of the viral fusion activity in acidic Golgi compartment prior to virion release. prM-E cleavage is inefficient, and many virions are only partially matured. These uncleaved prM would play a role in immune evasion. Its function is as follows. May play a role in virus budding. Exerts cytotoxic effects by activating a mitochondrial apoptotic pathway through M ectodomain. May display a viroporin activity. Binds to host cell surface receptor and mediates fusion between viral and cellular membranes. Envelope protein is synthesized in the endoplasmic reticulum in the form of heterodimer with protein prM. They play a role in virion budding in the ER, and the newly formed immature particle is covered with 60 spikes composed of heterodimer between precursor prM and envelope protein E. The virion is transported to the Golgi apparatus where the low pH causes dissociation of PrM-E heterodimers and formation of E homodimers. prM-E cleavage is inefficient, and many virions are only partially matured. These uncleaved prM would play a role in immune evasion. Functionally, involved in immune evasion, pathogenesis and viral replication. Once cleaved off the polyprotein, is targeted to three destinations: the viral replication cycle, the plasma membrane and the extracellular compartment. Essential for viral replication. Required for formation of the replication complex and recruitment of other non-structural proteins to the ER-derived membrane structures. Excreted as a hexameric lipoparticle that plays a role against host immune response. Antagonizing the complement function. Binds to the host macrophages and dendritic cells. Inhibits signal transduction originating from Toll-like receptor 3 (TLR3). In terms of biological role, disrupts the host endothelial glycocalyx layer of host pulmonary microvascular endothelial cells, inducing degradation of sialic acid and shedding of heparan sulfate proteoglycans. NS1 induces expression of sialidases, heparanase, and activates cathepsin L, which activates heparanase via enzymatic cleavage. These effects are probably linked to the endothelial hyperpermeability observed in severe dengue disease. Its function is as follows. Component of the viral RNA replication complex that functions in virion assembly and antagonizes the host immune response. Required cofactor for the serine protease function of NS3. May have membrane-destabilizing activity and form viroporins. Functionally, displays three enzymatic activities: serine protease, NTPase and RNA helicase. NS3 serine protease, in association with NS2B, performs its autocleavage and cleaves the polyprotein at dibasic sites in the cytoplasm: C-prM, NS2A-NS2B, NS2B-NS3, NS3-NS4A, NS4A-2K and NS4B-NS5. NS3 RNA helicase binds RNA and unwinds dsRNA in the 3' to 5' direction. In terms of biological role, regulates the ATPase activity of the NS3 helicase activity. NS4A allows NS3 helicase to conserve energy during unwinding. Plays a role in the inhibition of the host innate immune response. Interacts with host MAVS and thereby prevents the interaction between RIGI and MAVS. In turn, IFN-beta production is impaired. Interacts with host AUP1 which mediates induction of lipophagy in host cells and facilitates production of virus progeny particles. Its function is as follows. Functions as a signal peptide for NS4B and is required for the interferon antagonism activity of the latter. Induces the formation of ER-derived membrane vesicles where the viral replication takes place. Inhibits interferon (IFN)-induced host STAT1 phosphorylation and nuclear translocation, thereby preventing the establishment of cellular antiviral state by blocking the IFN-alpha/beta pathway. Functionally, replicates the viral (+) and (-) RNA genome, and performs the capping of genomes in the cytoplasm. NS5 methylates viral RNA cap at guanine N-7 and ribose 2'-O positions. Besides its role in RNA genome replication, also prevents the establishment of cellular antiviral state by blocking the interferon-alpha/beta (IFN-alpha/beta) signaling pathway. Inhibits host TYK2 and STAT2 phosphorylation, thereby preventing activation of JAK-STAT signaling pathway. May reduce immune responses by preventing the recruitment of the host PAF1 complex to interferon-responsive genes. This Dengue virus type 4 (strain Thailand/0348/1991) (DENV-4) protein is Genome polyprotein.